The chain runs to 280 residues: Hemin import ATP-binding protein HmuV (280 aa).

One can recognise an ABC transporter domain in the interval 26–260; that stretch reads LAAAGGLRVH…GLLSEVYDQP (235 aa). An ATP-binding site is contributed by 59–66; sequence GPNGAGKS.

It belongs to the ABC transporter superfamily. Heme (hemin) importer (TC 3.A.1.14.5) family. As to quaternary structure, the complex is composed of two ATP-binding proteins (HmuV), two transmembrane proteins (HmuU) and a solute-binding protein (HmuT).

It localises to the cell membrane. Its function is as follows. Part of the ABC transporter complex HmuTUV involved in hemin import. Responsible for energy coupling to the transport system. The polypeptide is Hemin import ATP-binding protein HmuV (Streptomyces coelicolor (strain ATCC BAA-471 / A3(2) / M145)).